A 298-amino-acid polypeptide reads, in one-letter code: MSIELDWTGLEKSFADSLCERLNAALADMDMPTFLGPTRVQAIELGSEGPDVQVIHIGHVWREFREAAVHASSASDKYNARATTPPRMPMRLRTFRQYDDNDLPTSVHGGADADSIASEHEESLSRWSDTESETGTCDSSSLWEEQTRLSDIPSLQMHLSVQWLTSTMRLSLTTSLKIAYNNDTIMSLPISLVVTGMELFAQAIVALDGVHRCVYLSLSEDSTEECAPDGLRAVHDARIRTRHQGQRILPFLALESKVGESAKHVLENVGKVERFVGDMLRQWLEDELVYPHFYTLYL.

In terms of domain architecture, SMP-LTD spans 1–298 (MSIELDWTGL…VYPHFYTLYL (298 aa)). Residues 118–142 (SEHEESLSRWSDTESETGTCDSSSL) form a disordered region. The span at 133–142 (ETGTCDSSSL) shows a compositional bias: polar residues.

Belongs to the MDM12 family. As to quaternary structure, component of the ER-mitochondria encounter structure (ERMES) or MDM complex, composed of MMM1, MDM10, MDM12 and MDM34. An MMM1 homodimer associates with one molecule of MDM12 on each side in a pairwise head-to-tail manner, and the SMP-LTD domains of MMM1 and MDM12 generate a continuous hydrophobic tunnel for phospholipid trafficking.

It localises to the mitochondrion outer membrane. The protein resides in the endoplasmic reticulum membrane. In terms of biological role, component of the ERMES/MDM complex, which serves as a molecular tether to connect the endoplasmic reticulum (ER) and mitochondria. Components of this complex are involved in the control of mitochondrial shape and protein biogenesis, and function in nonvesicular lipid trafficking between the ER and mitochondria. MDM12 is required for the interaction of the ER-resident membrane protein MMM1 and the outer mitochondrial membrane-resident beta-barrel protein MDM10. The MDM12-MMM1 subcomplex functions in the major beta-barrel assembly pathway that is responsible for biogenesis of all mitochondrial outer membrane beta-barrel proteins, and acts in a late step after the SAM complex. The MDM10-MDM12-MMM1 subcomplex further acts in the TOM40-specific pathway after the action of the MDM12-MMM1 complex. Essential for establishing and maintaining the structure of mitochondria and maintenance of mtDNA nucleoids. The protein is Mitochondrial distribution and morphology protein 12 of Malassezia globosa (strain ATCC MYA-4612 / CBS 7966) (Dandruff-associated fungus).